The sequence spans 735 residues: Photosystem I P700 chlorophyll a apoprotein A2 (735 aa).

The next 8 helical transmembrane spans lie at 47–70 (IFAS…FHVA), 136–159 (LYVG…LHLQ), 176–200 (LNHH…HVAI), 274–292 (MAHH…GHMY), 331–354 (LHFQ…QHMY), 370–396 (AALY…IFWI), 418–440 (AIIS…LYVH), and 518–536 (FLVH…LILV). Residues Cys-560 and Cys-569 each coordinate [4Fe-4S] cluster. 2 consecutive transmembrane segments (helical) span residues 576–597 (AFYL…YWHW) and 644–666 (LSVW…MFLI). His-655, Met-663, and Tyr-671 together coordinate chlorophyll a. Trp-672 serves as a coordination point for phylloquinone. Residues 708-728 (LVGLAHFSVGYVFTYAAFVIA) form a helical membrane-spanning segment.

It belongs to the PsaA/PsaB family. As to quaternary structure, the PsaA/B heterodimer binds the P700 chlorophyll special pair and subsequent electron acceptors. PSI consists of a core antenna complex that captures photons, and an electron transfer chain that converts photonic excitation into a charge separation. The eukaryotic PSI reaction center is composed of at least 11 subunits. P700 is a chlorophyll a/chlorophyll a' dimer, A0 is one or more chlorophyll a, A1 is one or both phylloquinones and FX is a shared 4Fe-4S iron-sulfur center. is required as a cofactor.

The protein localises to the plastid. It is found in the chloroplast thylakoid membrane. The catalysed reaction is reduced [plastocyanin] + hnu + oxidized [2Fe-2S]-[ferredoxin] = oxidized [plastocyanin] + reduced [2Fe-2S]-[ferredoxin]. Its function is as follows. PsaA and PsaB bind P700, the primary electron donor of photosystem I (PSI), as well as the electron acceptors A0, A1 and FX. PSI is a plastocyanin/cytochrome c6-ferredoxin oxidoreductase, converting photonic excitation into a charge separation, which transfers an electron from the donor P700 chlorophyll pair to the spectroscopically characterized acceptors A0, A1, FX, FA and FB in turn. Oxidized P700 is reduced on the lumenal side of the thylakoid membrane by plastocyanin or cytochrome c6. The chain is Photosystem I P700 chlorophyll a apoprotein A2 from Tetradesmus obliquus (Green alga).